Consider the following 587-residue polypeptide: MAAPTTEHAETIVPALCRRFGGETFVQQTTADGISTLWLPARILVETIRYLRSEIDRPYALLFDLTAVDERVRKHRDGMPASAYTVVYHLVSLERNADVRLKIALPETDPALPSIVAVCPAANWYEREVWDMFGIRFDGHPNLRRLIMPPTWQGHPLRKDHPARATEMEPFSLPDDVQQQEQEALRFVPEEWGMQRQSEDTDFLFLNLGPNHPSVHGVFRVALQLDGEEIVDAVPDIGYHHRGAEKMGERQSWHSYIPYTDRIDYLGGSMNNLPYVMAVEKLAGIEVPERARVIRVMISEFYRIASHLLFYGTFAQDVGQMSPIFYMFIDRERVFEIIESFTGARMHSSFFRIGGVAMDLPEGWDRLIREFIAYFPRRLAEYDKAVMANKLIQRRTRGIGAYTTTEAIDWSVTGAGLRATGLPWDYRKARPYSGYENFEFDVPTGTNGDCYDRCAVRVEEMRQSLRIIEQCVEHMPSGPYKAEHPLTTPPPKERTMHDIETLIQHFLSVSWGPVIPPGEVCVTIEATKGLNGYYLTSDGGTMSYRTRIRTPSFPHLQMIPLMSRGMMVADLIAILASIDFVMADVDR.

The interval 1–178 (MAAPTTEHAE…EPFSLPDDVQ (178 aa)) is NADH dehydrogenase I subunit C. Positions 202–587 (DFLFLNLGPN…IDFVMADVDR (386 aa)) are NADH dehydrogenase I subunit D.

The protein in the N-terminal section; belongs to the complex I 30 kDa subunit family. In the C-terminal section; belongs to the complex I 49 kDa subunit family. As to quaternary structure, NDH-1 is composed of 13 different subunits. Subunits NuoB, CD, E, F, and G constitute the peripheral sector of the complex.

The protein localises to the cell inner membrane. The catalysed reaction is a quinone + NADH + 5 H(+)(in) = a quinol + NAD(+) + 4 H(+)(out). Functionally, NDH-1 shuttles electrons from NADH, via FMN and iron-sulfur (Fe-S) centers, to quinones in the respiratory chain. The immediate electron acceptor for the enzyme in this species is believed to be ubiquinone. Couples the redox reaction to proton translocation (for every two electrons transferred, four hydrogen ions are translocated across the cytoplasmic membrane), and thus conserves the redox energy in a proton gradient. In Methylococcus capsulatus (strain ATCC 33009 / NCIMB 11132 / Bath), this protein is NADH-quinone oxidoreductase subunit C/D.